The primary structure comprises 345 residues: MNTIYPVIWSNNKVLLIDQTSLPSRYTLVEISRYEDMAKAIKTMIVRGAPAIGVAAAYGMYLGARDIQTQDRETFLKHLDKIAQILRQTRPTAVNLFWAISRMLKTAYETLGTVEEIKKILLETAQKIQEEDLQTCQAIGHNSLSILPTNPEKLTILTHCNAGALATAGYGTALGVIRSVWTAGRLNRVFADETRPRLQGAKLTAWECVQEKIPVTVISDNMAAHCMQKGLIDMVVVGADRIAANGDTANKIGTYGLAVIAKMHQVPFYVAAPLSTVDFSLETGDLIPIEERDPSELYQIGNTVIYPDGVDYYNPAFDVTPADLITGIITEQKTVNPKELITLKG.

Residues 47–49 (RGA), Arg-90, and Gln-199 each bind substrate. The Proton donor role is filled by Asp-240. 250 to 251 (NK) provides a ligand contact to substrate.

Belongs to the eIF-2B alpha/beta/delta subunits family. MtnA subfamily.

It carries out the reaction 5-(methylsulfanyl)-alpha-D-ribose 1-phosphate = 5-(methylsulfanyl)-D-ribulose 1-phosphate. The protein operates within amino-acid biosynthesis; L-methionine biosynthesis via salvage pathway; L-methionine from S-methyl-5-thio-alpha-D-ribose 1-phosphate: step 1/6. Functionally, catalyzes the interconversion of methylthioribose-1-phosphate (MTR-1-P) into methylthioribulose-1-phosphate (MTRu-1-P). The sequence is that of Methylthioribose-1-phosphate isomerase from Crocosphaera subtropica (strain ATCC 51142 / BH68) (Cyanothece sp. (strain ATCC 51142)).